A 331-amino-acid chain; its full sequence is Probable allantoicase (331 aa).

The protein belongs to the allantoicase family.

The catalysed reaction is allantoate + H2O = (S)-ureidoglycolate + urea. The protein operates within nitrogen metabolism; (S)-allantoin degradation; (S)-ureidoglycolate from allantoate (aminidohydrolase route): step 1/1. In Pseudomonas fluorescens (strain ATCC BAA-477 / NRRL B-23932 / Pf-5), this protein is Probable allantoicase.